The chain runs to 412 residues: Putative competence-damage inducible protein (412 aa).

This sequence belongs to the CinA family.

This is Putative competence-damage inducible protein from Clostridium perfringens (strain 13 / Type A).